Consider the following 190-residue polypeptide: Peptidyl-tRNA hydrolase (190 aa).

TRNA is bound at residue Phe14. The active-site Proton acceptor is the His19. TRNA is bound by residues Met64, Asn66, and Asn112.

Belongs to the PTH family. Monomer.

The protein resides in the cytoplasm. The enzyme catalyses an N-acyl-L-alpha-aminoacyl-tRNA + H2O = an N-acyl-L-amino acid + a tRNA + H(+). In terms of biological role, hydrolyzes ribosome-free peptidyl-tRNAs (with 1 or more amino acids incorporated), which drop off the ribosome during protein synthesis, or as a result of ribosome stalling. Catalyzes the release of premature peptidyl moieties from peptidyl-tRNA molecules trapped in stalled 50S ribosomal subunits, and thus maintains levels of free tRNAs and 50S ribosomes. This is Peptidyl-tRNA hydrolase from Staphylococcus aureus (strain bovine RF122 / ET3-1).